We begin with the raw amino-acid sequence, 126 residues long: Probable 4-amino-4-deoxy-L-arabinose-phosphoundecaprenol flippase subunit ArnF (126 aa).

A helical transmembrane segment spans residues 1-21 (MGFLWALFSVGLVSAAQLLLR). Over 22–47 (SAMVALPPLTDIVAFLQHLLHFQPGT) the chain is Periplasmic. A helical membrane pass occupies residues 48-68 (VGLFFGLLGYLLSMVCWYFAL). Over 69 to 76 (HRLPLSKA) the chain is Cytoplasmic. A helical membrane pass occupies residues 77–97 (YALLSLSYILVWAAAIWLPGW). At 98 to 100 (HEP) the chain is on the periplasmic side. The chain crosses the membrane as a helical span at residues 101–121 (FYWQSLLGVTIIVAGVLTIFW). Over 122 to 126 (PVKRR) the chain is Cytoplasmic.

It belongs to the ArnF family. In terms of assembly, heterodimer of ArnE and ArnF.

The protein resides in the cell inner membrane. Its pathway is bacterial outer membrane biogenesis; lipopolysaccharide biosynthesis. In terms of biological role, translocates 4-amino-4-deoxy-L-arabinose-phosphoundecaprenol (alpha-L-Ara4N-phosphoundecaprenol) from the cytoplasmic to the periplasmic side of the inner membrane. This Klebsiella pneumoniae (strain 342) protein is Probable 4-amino-4-deoxy-L-arabinose-phosphoundecaprenol flippase subunit ArnF.